The sequence spans 341 residues: Aspartate--ammonia ligase (341 aa).

This sequence belongs to the class-II aminoacyl-tRNA synthetase family. AsnA subfamily.

It localises to the cytoplasm. The catalysed reaction is L-aspartate + NH4(+) + ATP = L-asparagine + AMP + diphosphate + H(+). It functions in the pathway amino-acid biosynthesis; L-asparagine biosynthesis; L-asparagine from L-aspartate (ammonia route): step 1/1. The sequence is that of Aspartate--ammonia ligase from Clostridium tetani (strain Massachusetts / E88).